Reading from the N-terminus, the 158-residue chain is Protein Smg homolog (158 aa).

Belongs to the Smg family.

The chain is Protein Smg homolog from Coxiella burnetii (strain RSA 331 / Henzerling II).